The primary structure comprises 156 residues: Myosin regulatory light chain, striated adductor muscle (156 aa).

Ala-1 carries the post-translational modification Blocked amino end (Ala). 2 EF-hand domains span residues 15–50 and 84–119; these read KQIQ…LGRT and DTEE…MGDN. Ca(2+) is bound by residues Asp-28, Asp-30, Asp-32, and Asp-39.

In terms of biological role, in molluscan muscle, calcium regulation is associated with myosin rather than with actin. Muscle myosin contains two types of light chains: the catalytic light chain, essential for ATPase activity, and the regulatory light chain, a calcium-binding protein responsible for Ca(2+) dependent binding and Ca(2+) dependent Mg-ATPase activity. In Mizuhopecten yessoensis (Japanese scallop), this protein is Myosin regulatory light chain, striated adductor muscle.